Consider the following 988-residue polypeptide: Transposase for transposon Tn1546 (988 aa).

It belongs to the transposase 7 family.

Required for transposition of transposon Tn1546. The sequence is that of Transposase for transposon Tn1546 from Enterococcus faecium (Streptococcus faecium).